Here is a 439-residue protein sequence, read N- to C-terminus: GTPase Der (439 aa).

EngA-type G domains lie at 4-168 and 177-352; these read PIVA…KDDE and INIA…DNYT. GTP contacts are provided by residues 10–17, 57–61, 120–123, 183–190, 230–234, and 295–298; these read GRPNVGKS, DTGGI, NKID, GKPNVGKS, DTAGL, and NKWD. A KH-like domain is found at 353–437; the sequence is KRVKTGVLND…GIKLEFRERK (85 aa).

The protein belongs to the TRAFAC class TrmE-Era-EngA-EngB-Septin-like GTPase superfamily. EngA (Der) GTPase family. Associates with the 50S ribosomal subunit.

Functionally, GTPase that plays an essential role in the late steps of ribosome biogenesis. The polypeptide is GTPase Der (Clostridium botulinum (strain Okra / Type B1)).